The following is a 273-amino-acid chain: Large ribosomal subunit protein uL2cz/uL2cy (273 aa).

Disordered stretches follow at residues 1–27 (MAKHLYKTPIPSTRKGTVDRQVKSNPR) and 225–273 (PVDH…RRRK).

Belongs to the universal ribosomal protein uL2 family. As to quaternary structure, part of the 50S ribosomal subunit.

Its subcellular location is the plastid. The protein resides in the chloroplast. This chain is Large ribosomal subunit protein uL2cz/uL2cy (rpl2-A), found in Lolium perenne (Perennial ryegrass).